Here is a 324-residue protein sequence, read N- to C-terminus: Holliday junction branch migration complex subunit RuvB (324 aa).

Positions 1–168 are large ATPase domain (RuvB-L); the sequence is MEDLALRPKT…FGIVEHLEYY (168 aa). ATP-binding positions include Leu-6, Arg-7, Gly-48, Lys-51, Thr-52, Thr-53, 115 to 117, Arg-158, Tyr-168, and Arg-205; that span reads EDF. Thr-52 provides a ligand contact to Mg(2+). Positions 169–239 are small ATPAse domain (RuvB-S); the sequence is TPEELAQGVM…RALEALAALG (71 aa). Positions 242 to 324 are head domain (RuvB-H); sequence ELGLEKRDRE…PPPVGPLLEP (83 aa). DNA-binding residues include Arg-297 and Arg-302.

The protein belongs to the RuvB family. Homohexamer. Forms an RuvA(8)-RuvB(12)-Holliday junction (HJ) complex. HJ DNA is sandwiched between 2 RuvA tetramers; dsDNA enters through RuvA and exits via RuvB. An RuvB hexamer assembles on each DNA strand where it exits the tetramer. Each RuvB hexamer is contacted by two RuvA subunits (via domain III) on 2 adjacent RuvB subunits; this complex drives branch migration. In the full resolvosome a probable DNA-RuvA(4)-RuvB(12)-RuvC(2) complex forms which resolves the HJ.

It is found in the cytoplasm. The enzyme catalyses ATP + H2O = ADP + phosphate + H(+). Its activity is regulated as follows. The ATPase activity of RuvB is enhanced by RuvA. The RuvA-RuvB-RuvC complex processes Holliday junction (HJ) DNA during genetic recombination and DNA repair, while the RuvA-RuvB complex plays an important role in the rescue of blocked DNA replication forks via replication fork reversal (RFR). RuvA specifically binds to HJ cruciform DNA, conferring on it an open structure. The RuvB hexamer acts as an ATP-dependent pump, pulling dsDNA into and through the RuvAB complex. RuvB forms 2 homohexamers on either side of HJ DNA bound by 1 or 2 RuvA tetramers; 4 subunits per hexamer contact DNA at a time. Coordinated motions by a converter formed by DNA-disengaged RuvB subunits stimulates ATP hydrolysis and nucleotide exchange. Immobilization of the converter enables RuvB to convert the ATP-contained energy into a lever motion, pulling 2 nucleotides of DNA out of the RuvA tetramer per ATP hydrolyzed, thus driving DNA branch migration. The RuvB motors rotate together with the DNA substrate, which together with the progressing nucleotide cycle form the mechanistic basis for DNA recombination by continuous HJ branch migration. Branch migration allows RuvC to scan DNA until it finds its consensus sequence, where it cleaves and resolves cruciform DNA. Functionally, has Mg(2+)-, DNA-dependent ATPase activity; dsDNA and supercoiled DNA but not ssDNA stimulate activity. Binds to linear dsDNA in the absence of ATP or ATP-gamma-S. This subunit can promote Holliday junction migration alone in vitro. Partially complements an E.coli deletion for UV sensitivity. The sequence is that of Holliday junction branch migration complex subunit RuvB from Thermus thermophilus.